Consider the following 778-residue polypeptide: MNLTEDCMVFEDVAIYFSQEEWGILNDAQRHLHSNVMLENFALLSSVGCWHGAKDEEVPSKQCVSVRVLQVTIPKPALSTLKAQPCKMCSSILKDILHLAEHDGTHPEQGLYTCAAEHDLHQKEQIREKLTRSDEWRPSFVNHSAHVGERNFTCTQGGKDFTASSDLLQQQVLNSGWKLYRDTQDGEAFQGEQNDFNSSQGGKDFCHQHGLFEHQKTHNGERPYEFSECGELFRYNSNLIKYQQNHAGERPYEGTEYGKTFIRKSNLVQHQKIHSEGFLSKRSDPIEHQEILSRPTPYECTQCGKAFLTQAHLVGHQKTHTGEQPYECNKCGKFFMYNSKLIRHQKVHTGERRYECSECGKLFMDSFTLGRHQRVHTGERPFECSICGKFFSHRSTLNMHQRVHAGKRLYKCSECGKAFSLKHNVVQHLKIHTGERPYECTECEKAFVRKSHLVQHQKIHTDAFSKRSDLIQHKRIDIRPRPYTCSECGKAFLTQAHLVGHQKIHTGERPYECTQCAKAFVRKSHLVQHEKIHTDAFSKRSDLIQHKRIDLRPRPYVCSECGKAFLTQAHLDGHQKIQTGERRYECNECGKFFLDSYKLVIHQRIHTGEKPYKCSKCGKFFRYRCTLSRHQKVHTGERPYECSECGKFFRDSYKLIIHQRVHTGEKPYECSNCGKFLRYRSTFIKHHKVCTGEKPHECSKCRELFRTKSSLIIHQQSHTGESPFKLRECGKDFNKCNTGQRQKTHTGERSYECGESSKVFKYNSSLIKHQIIHTGKRP.

A KRAB domain is found at 8–101; it reads MVFEDVAIYF…ILKDILHLAE (94 aa). The C2H2-type 1; degenerate zinc-finger motif lies at 152–174; sequence FTCTQGGKDFTASSDLLQQQVLN. Residues 196 to 218 form a C2H2-type 2; degenerate zinc finger; that stretch reads FNSSQGGKDFCHQHGLFEHQKTH. The C2H2-type 3; degenerate zinc-finger motif lies at 224-246; it reads YEFSECGELFRYNSNLIKYQQNH. A C2H2-type 4; degenerate zinc finger spans residues 252–274; that stretch reads YEGTEYGKTFIRKSNLVQHQKIH. 6 C2H2-type zinc fingers span residues 298 to 320, 326 to 348, 354 to 376, 382 to 404, 410 to 432, and 438 to 460; these read YECT…QKTH, YECN…QKVH, YECS…QRVH, FECS…QRVH, YKCS…LKIH, and YECT…QKIH. Lysine 466 is modified (N6-acetyllysine). 2 consecutive C2H2-type zinc fingers follow at residues 483 to 505 and 511 to 533; these read YTCS…QKIH and YECT…EKIH. Lysine 539 is subject to N6-acetyllysine. A C2H2-type 13; degenerate zinc finger spans residues 556–578; it reads YVCSECGKAFLTQAHLDGHQKIQ. 3 consecutive C2H2-type zinc fingers follow at residues 584 to 606, 612 to 634, and 640 to 662; these read YECN…QRIH, YKCS…QKVH, and YECS…QRVH. The C2H2-type 17; atypical zinc finger occupies 668–690; it reads YECSNCGKFLRYRSTFIKHHKVC. Residues 696–718 form a C2H2-type 18 zinc finger; it reads HECSKCRELFRTKSSLIIHQQSH. The segment at 751 to 773 adopts a C2H2-type 19; degenerate zinc-finger fold; that stretch reads YECGESSKVFKYNSSLIKHQIIH. Residues lysine 761 and lysine 768 each participate in a glycyl lysine isopeptide (Lys-Gly) (interchain with G-Cter in SUMO2) cross-link.

Belongs to the krueppel C2H2-type zinc-finger protein family.

The protein resides in the nucleus. Its function is as follows. May be involved in transcriptional regulation. In Homo sapiens (Human), this protein is Zinc finger protein 749 (ZNF749).